Here is a 336-residue protein sequence, read N- to C-terminus: Cell division protein ZipA (336 aa).

Residues 1–6 (MEDLQL) are Periplasmic-facing. A helical membrane pass occupies residues 7 to 27 (VLFVLGAIAIIAVLVHGFWSI). Over 28-336 (RKQQPKPIKE…DYLRRIKAIV (309 aa)) the chain is Cytoplasmic. Disordered stretches follow at residues 31–118 (QPKP…PVRA) and 174–200 (YGATTQASPQPASPVQSQAPREPEPLG). The segment covering 73–91 (LPSSRNHTSVPVMTLQKAS) has biased composition (polar residues). Basic and acidic residues predominate over residues 108 to 118 (TTAERAEPVRA). The span at 179–193 (QASPQPASPVQSQAP) shows a compositional bias: low complexity.

The protein belongs to the ZipA family. As to quaternary structure, interacts with FtsZ via their C-terminal domains.

It localises to the cell inner membrane. In terms of biological role, essential cell division protein that stabilizes the FtsZ protofilaments by cross-linking them and that serves as a cytoplasmic membrane anchor for the Z ring. Also required for the recruitment to the septal ring of downstream cell division proteins. This chain is Cell division protein ZipA, found in Shewanella denitrificans (strain OS217 / ATCC BAA-1090 / DSM 15013).